A 605-amino-acid polypeptide reads, in one-letter code: Apoptosis-inducing factor 3 (605 aa).

Basic and acidic residues predominate over residues valine 18–leucine 29. A disordered region spans residues valine 18 to glycine 44. The region spanning alanine 70–isoleucine 165 is the Rieske domain. The [2Fe-2S] cluster site is built by cysteine 109, histidine 111, cysteine 128, and histidine 131. Residues glycine 201 to alanine 205, arginine 235, lysine 240, valine 270, aspartate 467, and tryptophan 514 each bind FAD.

This sequence belongs to the FAD-dependent oxidoreductase family.

It is found in the mitochondrion. Its function is as follows. Induces apoptosis through a caspase dependent pathway. Reduces mitochondrial membrane potential. The polypeptide is Apoptosis-inducing factor 3 (Aifm3) (Mus musculus (Mouse)).